The sequence spans 275 residues: MANFTAADVKRLRELTGAGMLDCKNALAESDGDFDKAVEALRIKGAKDVGKRAERATAEGLVAAQGGALIELNSETDFVAKNAEFQALADQIVAAAASSKAADVDALKAAKIGDTTVEQAIAELSAKIGEKLELRRVAHFDGTVEAYLHRRAADLPPAVGVLVEYQGSGKDSDKEAAHAVALQIAALKARYLSRGDVPEDVVASERRIAEETAKAEGKPEQALPKIVEGRLNGFFKDAVLLEQPSVSDSKKTVKALLDEAGVTVTRFVRFEVGQA.

Residues 76 to 79 form an involved in Mg(2+) ion dislocation from EF-Tu region; it reads TDFV.

This sequence belongs to the EF-Ts family.

Its subcellular location is the cytoplasm. Its function is as follows. Associates with the EF-Tu.GDP complex and induces the exchange of GDP to GTP. It remains bound to the aminoacyl-tRNA.EF-Tu.GTP complex up to the GTP hydrolysis stage on the ribosome. The chain is Elongation factor Ts from Mycolicibacterium paratuberculosis (strain ATCC BAA-968 / K-10) (Mycobacterium paratuberculosis).